A 534-amino-acid polypeptide reads, in one-letter code: MATGLQVPLPQLATGLLLLLSVQPWAESGKVLVVPTDGSHWLSMREALRDLHARGHQVVVLTLEVNMYIKEENFFTLTTYAISWTQDEFDRLLLGHTQSFFETEHLLMKFSRRMAIMNNMSLIIHRSCVELLHNEALIRHLHATSFDVVLTDPFHLCAAVLAKYLSIPAVFFLRNIPCDLDFKGTQCPNPSSYIPRLLTTNSDHMTFLQRVKNMLYPLALSYLCHAVSAPYASLASELFQREVSVVDLVSHASVWLFRGDFVMDYPRPIMPNMVFIGGINCANGKPLSQEFEAYINASGEHGIVVFSLGSMVSEIPEKKAMAIADALGKIPQTVLWRYTGTRPSNLANNTILVKWLPQNDLLGHPMTRAFITHAGSHGVYESICNGVPMVMMPLFGDQMDNAKRMETKGAGVTLNVLEMTSEDLENALKAVINDKSYKENIMRLSSLHKDRPVEPLDLAVFWVEFVMRHKGAPHLRPAAHDLTWYQYHSLDVIGFLLAVVLTVAFITFKCCAYGYRKCLGKKGRVKKAHKSKTH.

The signal sequence occupies residues 1-28 (MATGLQVPLPQLATGLLLLLSVQPWAES). N-linked (GlcNAc...) asparagine glycans are attached at residues asparagine 119, asparagine 296, and asparagine 348. A helical transmembrane segment spans residues 492 to 508 (VIGFLLAVVLTVAFITF).

The protein belongs to the UDP-glycosyltransferase family. In terms of assembly, homodimer. Homooligomer. Interacts with UGT1A1, UGT1A3, UGT1A4, UGT1A6, UGT1A7, UGT1A8, UGT1A9 and UGT1A10 to form heterodimers. Isoform 1 interacts with isoform 2/i2 suggesting that oligomerization is involved in negative regulation of transferase activity by isoform 2. Isoform 1 also interacts with respective i2 isoforms of UGT1A1, UGT1A3, UGT1A4, UGT1A6, UGT1A7, UGT1A8, UGT1A9 and UGT1A10. Isoform 1 and isoform 2 are expressed in colon and small intestine. Neither isoform is expressed in liver, kidney or esophagus.

The protein localises to the endoplasmic reticulum membrane. The catalysed reaction is glucuronate acceptor + UDP-alpha-D-glucuronate = acceptor beta-D-glucuronoside + UDP + H(+). It carries out the reaction zolasartan + UDP-alpha-D-glucuronate = zolarsartan-1-N-beta-D-glucuronide + UDP. Functionally, UDP-glucuronosyltransferase (UGT) that catalyzes phase II biotransformation reactions in which lipophilic substrates are conjugated with glucuronic acid to increase the metabolite's water solubility, thereby facilitating excretion into either the urine or bile. Essential for the elimination and detoxification of drugs, xenobiotics and endogenous compounds. Involved in the glucuronidation of the AGTR1 angiotensin receptor antagonist zolarsatan, a drug which can inhibit the effect of angiotensin II. In terms of biological role, lacks UGT glucuronidation activity but acts as a negative regulator of isoform 1. The polypeptide is UDP-glucuronosyltransferase 1A5 (Homo sapiens (Human)).